Reading from the N-terminus, the 292-residue chain is MQHLIEKANTLMEALPYIRRFSGKTIVIKYGGHAMSDEALKKSFALDVILLKSLGINTVVVHGGGPQINETLKRYGIVSEFVRGMRVTDAATMQVVEMVLTGQVNKEVVGYLNQHGGRAVGLSGKDGSLLLCRKLLQEVKQGDGSLEKVDIGFVGDVVKVNQELIQTLEHGKFIPVIAPVGVGEDGESYNVNADLVAGRVAGALKAEKLILLTDVEGVKDKAGELIPGIVLDDVPRLIDGGVITGGMIPKVTCCVDAIEEGVKKASIIDGRVLHAVLLEIFTDVGVGTEIRR.

Residues 64–65 (GG), Arg-86, and Asn-190 each bind substrate.

This sequence belongs to the acetylglutamate kinase family. ArgB subfamily.

It is found in the cytoplasm. The enzyme catalyses N-acetyl-L-glutamate + ATP = N-acetyl-L-glutamyl 5-phosphate + ADP. It functions in the pathway amino-acid biosynthesis; L-arginine biosynthesis; N(2)-acetyl-L-ornithine from L-glutamate: step 2/4. Functionally, catalyzes the ATP-dependent phosphorylation of N-acetyl-L-glutamate. The protein is Acetylglutamate kinase of Geobacter metallireducens (strain ATCC 53774 / DSM 7210 / GS-15).